The sequence spans 637 residues: Chaperone protein HtpG (637 aa).

Residues 1-345 form an a; substrate-binding region; it reads MSQQETHGFQ…SNDLPLNVSR (345 aa). Residues 346-562 form a b region; sequence EILQDNHVTK…EGEMSTQMIK (217 aa). The tract at residues 563-637 is c; it reads LMQAAGQPVP…MNQMLLANMK (75 aa).

The protein belongs to the heat shock protein 90 family. In terms of assembly, homodimer.

Its subcellular location is the cytoplasm. Its function is as follows. Molecular chaperone. Has ATPase activity. The chain is Chaperone protein HtpG from Shewanella baltica (strain OS185).